A 178-amino-acid chain; its full sequence is Stathmin-2-A (178 aa).

One can recognise an SLD domain in the interval Asp-38–Gly-178. A coiled-coil region spans residues Lys-75–Gly-178.

This sequence belongs to the stathmin family. In terms of tissue distribution, nervous tissue.

It is found in the cytoplasm. The protein resides in the membrane. The protein localises to the cell projection. Its subcellular location is the lamellipodium. The polypeptide is Stathmin-2-A (stmn2-a) (Xenopus laevis (African clawed frog)).